Reading from the N-terminus, the 255-residue chain is MSGHSKWATTKHKKAIIDSRRAKSFAKLIKNIEVAAKIGGADMSGNPTLVDAVQKAKKTSVPNDNIDRAVKRGAGLLGEVVDYQTIMYEGYAANGVAMLVECLTDNKNRAAAEVRTAMSRNGGTMADPGSVAYNFHRKGVIAVPHADAPTEDDVLAAVLDAGAEDVTDHGEVFEIRCEPSDMVGVRQALQEAGIDYDSADVEFVPQVKVEVDLETARKVNKLVDAMEDLDDVQNIYVNSDVPADVQAALDDDDEE.

Belongs to the TACO1 family.

The protein resides in the cytoplasm. The sequence is that of Probable transcriptional regulatory protein CMS0715 from Clavibacter sepedonicus (Clavibacter michiganensis subsp. sepedonicus).